We begin with the raw amino-acid sequence, 190 residues long: Elongation factor P-like protein (190 aa).

Belongs to the elongation factor P family.

The sequence is that of Elongation factor P-like protein from Escherichia fergusonii (strain ATCC 35469 / DSM 13698 / CCUG 18766 / IAM 14443 / JCM 21226 / LMG 7866 / NBRC 102419 / NCTC 12128 / CDC 0568-73).